The chain runs to 439 residues: UDP-N-acetylmuramoylalanine--D-glutamate ligase (439 aa).

Gly-112–Thr-118 is an ATP binding site.

This sequence belongs to the MurCDEF family.

It localises to the cytoplasm. The enzyme catalyses UDP-N-acetyl-alpha-D-muramoyl-L-alanine + D-glutamate + ATP = UDP-N-acetyl-alpha-D-muramoyl-L-alanyl-D-glutamate + ADP + phosphate + H(+). It functions in the pathway cell wall biogenesis; peptidoglycan biosynthesis. Functionally, cell wall formation. Catalyzes the addition of glutamate to the nucleotide precursor UDP-N-acetylmuramoyl-L-alanine (UMA). The polypeptide is UDP-N-acetylmuramoylalanine--D-glutamate ligase (Mannheimia succiniciproducens (strain KCTC 0769BP / MBEL55E)).